Here is a 554-residue protein sequence, read N- to C-terminus: uncharacterized protein (554 aa).

Ca(2+) contacts are provided by aspartate 327 and asparagine 328.

Belongs to the sulfatase family. The cofactor is Ca(2+).

It localises to the cytoplasm. The protein localises to the nucleus. This is an uncharacterized protein from Schizosaccharomyces pombe (strain 972 / ATCC 24843) (Fission yeast).